The following is a 359-amino-acid chain: Protein trichome birefringence-like 42 (359 aa).

The helical; Signal-anchor for type II membrane protein transmembrane segment at 7-25 (LFLLLLIFLVDLSDYGVLA) threads the bilayer. The short motif at 110–112 (GDS) is the GDS motif element. The DCXHWCLPGXXDXWN motif signature appears at 335-349 (DCSHWCLPGVPDAWN).

This sequence belongs to the PC-esterase family. TBL subfamily.

It localises to the membrane. Functionally, may act as a bridging protein that binds pectin and other cell wall polysaccharides. Probably involved in maintaining esterification of pectins. May be involved in the specific O-acetylation of cell wall polymers. This chain is Protein trichome birefringence-like 42 (TBL42), found in Arabidopsis thaliana (Mouse-ear cress).